The chain runs to 359 residues: 5-amino-6-(D-ribitylamino)uracil--L-tyrosine 4-hydroxyphenyl transferase (359 aa).

The 238-residue stretch at 45–282 (VTYVVNANIN…TYAISRIFFK (238 aa)) folds into the Radical SAM core domain. [4Fe-4S] cluster-binding residues include Cys-59, Cys-63, and Cys-66.

The protein belongs to the radical SAM superfamily. CofH family. As to quaternary structure, consists of two subunits, CofG and CofH. It depends on [4Fe-4S] cluster as a cofactor.

It carries out the reaction 5-amino-6-(D-ribitylamino)uracil + L-tyrosine + S-adenosyl-L-methionine = 5-amino-5-(4-hydroxybenzyl)-6-(D-ribitylimino)-5,6-dihydrouracil + 2-iminoacetate + 5'-deoxyadenosine + L-methionine + H(+). Its pathway is cofactor biosynthesis; coenzyme F0 biosynthesis. Catalyzes the radical-mediated synthesis of 5-amino-5-(4-hydroxybenzyl)-6-(D-ribitylimino)-5,6-dihydrouracil from 5-amino-6-(D-ribitylamino)uracil and L-tyrosine. In Methanococcus maripaludis (strain C5 / ATCC BAA-1333), this protein is 5-amino-6-(D-ribitylamino)uracil--L-tyrosine 4-hydroxyphenyl transferase.